Here is a 608-residue protein sequence, read N- to C-terminus: MSAVFDASAFLATCSNRPGVYRMFDAEAKLLYVGKAKSLKKRLASYFRKSGLAPKTAALVARIAQVETTITANETEALLLEQTLIKEWRPPYNILLRDDKSYPFVFLSSEDEYPRLSLHRGAKKRKGRYFGPYPSAGAIRESLNLLQKAFLVRQCEDSYFRNRTRPCLQYQIKRCKGPCVGLVSPEEYAEDVRHSVMFLEGRSNALADELNVGMEQAAMRLDFEKAAELRDQVAILRRVQDQQSMEGGNGDVDIVAAIVTPGGACVHLISVRGGRVLGSKNFFPQVAIEEEVGEVLLAFLGQYYLSHQERDLPAELIVNVTHEDFPVLVSAIAEARGRELEISYRVRGTRARWQQLAVTNAEQALGARLANRQHVAARFEALAEALDLAEPPQRLECFDISHSSGEATVASCVVFGPEGPLKSDYRRYNIEGVTAGDDYAAMHQALTRRFSRLKDGEGKMPDILLVDGGKGQLAMAQEVLQELAVAGLILLGVAKGVTRKPGLETLYLNDASHEFTLPADSPALHLIQQIRDEAHRFAITGHRARRGKARRTSTLEDVPGVGPKRRRDLLKHFGGLQELSRASIDELAKAPGISKKLAEQIYAVLHSE.

The GIY-YIG domain maps to 16-94; that stretch reads NRPGVYRMFD…IKEWRPPYNI (79 aa). Residues 204–239 enclose the UVR domain; that stretch reads NALADELNVGMEQAAMRLDFEKAAELRDQVAILRRV.

It belongs to the UvrC family. Interacts with UvrB in an incision complex.

It localises to the cytoplasm. Functionally, the UvrABC repair system catalyzes the recognition and processing of DNA lesions. UvrC both incises the 5' and 3' sides of the lesion. The N-terminal half is responsible for the 3' incision and the C-terminal half is responsible for the 5' incision. The chain is UvrABC system protein C from Pseudomonas aeruginosa (strain ATCC 15692 / DSM 22644 / CIP 104116 / JCM 14847 / LMG 12228 / 1C / PRS 101 / PAO1).